We begin with the raw amino-acid sequence, 312 residues long: uncharacterized protein (312 aa).

A signal peptide spans 1-28 (MNSADTQEPKSFNHTDMWTAFGTTMSGA).

Functionally, the FAS-operon encodes genes involved in cytokinin production and in host plant fasciation (leafy gall). This is an uncharacterized protein from Rhodococcoides fascians (Rhodococcus fascians).